A 121-amino-acid chain; its full sequence is Large ribosomal subunit protein uL24 (121 aa).

The protein belongs to the universal ribosomal protein uL24 family. As to quaternary structure, part of the 50S ribosomal subunit.

Functionally, one of two assembly initiator proteins, it binds directly to the 5'-end of the 23S rRNA, where it nucleates assembly of the 50S subunit. In terms of biological role, located at the polypeptide exit tunnel on the outside of the subunit. The polypeptide is Large ribosomal subunit protein uL24 (Thermococcus kodakarensis (strain ATCC BAA-918 / JCM 12380 / KOD1) (Pyrococcus kodakaraensis (strain KOD1))).